We begin with the raw amino-acid sequence, 176 residues long: NAD(P)H-quinone oxidoreductase subunit 6, chloroplastic (176 aa).

A run of 5 helical transmembrane segments spans residues 10-30, 32-52, 61-81, 92-112, and 152-172; these read FLLVFLGSGLILGGLGVVLLP, PIYSAFSLGLVLVCTSLFYIL, AQLLIYVGAINVLIIFAVMFM, LWTVGDGITSMVCISLFISLI, and FFLPFELISIILLDALIGAIA.

It belongs to the complex I subunit 6 family. NDH is composed of at least 16 different subunits, 5 of which are encoded in the nucleus.

It is found in the plastid. The protein resides in the chloroplast thylakoid membrane. It catalyses the reaction a plastoquinone + NADH + (n+1) H(+)(in) = a plastoquinol + NAD(+) + n H(+)(out). The enzyme catalyses a plastoquinone + NADPH + (n+1) H(+)(in) = a plastoquinol + NADP(+) + n H(+)(out). In terms of biological role, NDH shuttles electrons from NAD(P)H:plastoquinone, via FMN and iron-sulfur (Fe-S) centers, to quinones in the photosynthetic chain and possibly in a chloroplast respiratory chain. The immediate electron acceptor for the enzyme in this species is believed to be plastoquinone. Couples the redox reaction to proton translocation, and thus conserves the redox energy in a proton gradient. This is NAD(P)H-quinone oxidoreductase subunit 6, chloroplastic (ndhG) from Atropa belladonna (Belladonna).